The following is a 657-amino-acid chain: WD repeat-containing protein 70 (657 aa).

2 disordered regions span residues 1-21 (MEHSGTSEVTGADTAGPDPQL) and 43-172 (FEQT…PVQR). Basic and acidic residues predominate over residues 45–78 (QTRRTAVERSRKTLEAREKEEEMNREKELRKQIE). Residues 82-105 (PAPSSSSAARERSQSSCRDTSSSD) are compositionally biased toward low complexity. 2 stretches are compositionally biased toward acidic residues: residues 106–119 (SESDDSSDSSDDEL) and 150–168 (EEGEDDDDDELDDEGEEDN). 7 WD repeats span residues 183 to 222 (HGTKTVSALGLDPSGARLVTGGYDYDVKFWDFAGMDASFK), 230 to 271 (CECH…ECIK), 284 to 324 (GHTA…KQKS), 333 to 372 (GKKVIPTTCTYSRDGNLVAAACQNGSIQIWDRNLTVHPKF), 379 to 418 (DPGTDTSCVAFSYDGNVLASRGGDDTLKLWDVRQFNKPLF), 424 to 469 (PTLF…RVYE), and 472 to 511 (ITDASVVRCLWHPKLNQIMVGTGNGLAKVYYDPNKSQRGA). Residue lysine 299 forms a Glycyl lysine isopeptide (Lys-Gly) (interchain with G-Cter in SUMO2) linkage. The residue at position 455 (lysine 455) is an N6-acetyllysine. Positions 543-568 (REPRQRSTRKQLEKDRLDPLKSHKPE) are enriched in basic and acidic residues. A disordered region spans residues 543–584 (REPRQRSTRKQLEKDRLDPLKSHKPEPPVAGPGRGGRVGTHG). Positions 574 to 584 (PGRGGRVGTHG) are enriched in gly residues. Residue threonine 582 is modified to Phosphothreonine. Residues lysine 593 and lysine 599 each participate in a glycyl lysine isopeptide (Lys-Gly) (interchain with G-Cter in SUMO2) cross-link. Phosphoserine is present on residues serine 624 and serine 641. A disordered region spans residues 634-657 (TMFAQVESDDEESKNEPEWKKRKI). Residues 647–657 (KNEPEWKKRKI) are compositionally biased toward basic and acidic residues.

This sequence belongs to the WD repeat GAD-1 family.

The sequence is that of WD repeat-containing protein 70 (Wdr70) from Mus musculus (Mouse).